The sequence spans 191 residues: Imidazoleglycerol-phosphate dehydratase (191 aa).

It belongs to the imidazoleglycerol-phosphate dehydratase family.

The protein resides in the cytoplasm. The catalysed reaction is D-erythro-1-(imidazol-4-yl)glycerol 3-phosphate = 3-(imidazol-4-yl)-2-oxopropyl phosphate + H2O. It participates in amino-acid biosynthesis; L-histidine biosynthesis; L-histidine from 5-phospho-alpha-D-ribose 1-diphosphate: step 6/9. The polypeptide is Imidazoleglycerol-phosphate dehydratase (Methanosarcina barkeri (strain Fusaro / DSM 804)).